The following is a 123-amino-acid chain: Small ribosomal subunit protein uS12 (123 aa).

Positions 1 to 24 are disordered; it reads MPTINQLVRKGRTPQKVKSKVPAM. Positions 9–19 are enriched in basic residues; the sequence is RKGRTPQKVKS. Aspartate 89 carries the 3-methylthioaspartic acid modification.

Belongs to the universal ribosomal protein uS12 family. As to quaternary structure, part of the 30S ribosomal subunit. Contacts proteins S8 and S17. May interact with IF1 in the 30S initiation complex.

Functionally, with S4 and S5 plays an important role in translational accuracy. Its function is as follows. Interacts with and stabilizes bases of the 16S rRNA that are involved in tRNA selection in the A site and with the mRNA backbone. Located at the interface of the 30S and 50S subunits, it traverses the body of the 30S subunit contacting proteins on the other side and probably holding the rRNA structure together. The combined cluster of proteins S8, S12 and S17 appears to hold together the shoulder and platform of the 30S subunit. The chain is Small ribosomal subunit protein uS12 from Sphingopyxis alaskensis (strain DSM 13593 / LMG 18877 / RB2256) (Sphingomonas alaskensis).